We begin with the raw amino-acid sequence, 119 residues long: Large ribosomal subunit protein bL19 (119 aa).

The protein belongs to the bacterial ribosomal protein bL19 family.

In terms of biological role, this protein is located at the 30S-50S ribosomal subunit interface and may play a role in the structure and function of the aminoacyl-tRNA binding site. This Treponema denticola (strain ATCC 35405 / DSM 14222 / CIP 103919 / JCM 8153 / KCTC 15104) protein is Large ribosomal subunit protein bL19.